The chain runs to 254 residues: RING-H2 finger protein ATL28 (254 aa).

The helical transmembrane segment at 25–45 (VVLTGVLLFVIFAGFFSLFLW) threads the bilayer. The RING-type; atypical zinc finger occupies 103 to 145 (CAICLSEFSDEDTVRLITVCRHPFHSNCIDLWFELHKTCPVCR).

Belongs to the RING-type zinc finger family. ATL subfamily.

Its subcellular location is the membrane. The catalysed reaction is S-ubiquitinyl-[E2 ubiquitin-conjugating enzyme]-L-cysteine + [acceptor protein]-L-lysine = [E2 ubiquitin-conjugating enzyme]-L-cysteine + N(6)-ubiquitinyl-[acceptor protein]-L-lysine.. It participates in protein modification; protein ubiquitination. This Arabidopsis thaliana (Mouse-ear cress) protein is RING-H2 finger protein ATL28 (ATL28).